The following is a 185-amino-acid chain: MSPARLRITDRTGDLFAAPANTLLIHACNTVGSWGGGIALAFRNLYPAEFRVYRAHCARSTPNQLVGTALLIAPQRASLNGSGGGGHYIGCLFTSRRFGAARDPPDRILRATGPAMRHLMRLVAEEEERTGVRIGEVRMCRINAGLFAVPWESSKRALEAMELGDGEVPGCAQGGVVEVVAWERA.

One can recognise a Macro domain in the interval 1 to 185 (MSPARLRITD…VVEVVAWERA (185 aa)). Residues 13–15 (GDL), 27–29 (ACN), 34–39 (WGGGIA), and 142–148 (INAGLFA) each bind substrate.

It belongs to the POA1 family.

The enzyme catalyses ADP-alpha-D-ribose 1''-phosphate + H2O = ADP-D-ribose + phosphate. In terms of biological role, highly specific phosphatase involved in the metabolism of ADP-ribose 1''-phosphate (Appr1p) which is produced as a consequence of tRNA splicing. This Chaetomium globosum (strain ATCC 6205 / CBS 148.51 / DSM 1962 / NBRC 6347 / NRRL 1970) (Soil fungus) protein is ADP-ribose 1''-phosphate phosphatase (POA1).